We begin with the raw amino-acid sequence, 603 residues long: DNA ligase (603 aa).

Residue glutamate 262 participates in ATP binding. Lysine 264 (N6-AMP-lysine intermediate) is an active-site residue. ATP contacts are provided by arginine 269, arginine 285, glutamate 315, phenylalanine 355, arginine 432, and lysine 438.

The protein belongs to the ATP-dependent DNA ligase family. Mg(2+) serves as cofactor.

The catalysed reaction is ATP + (deoxyribonucleotide)n-3'-hydroxyl + 5'-phospho-(deoxyribonucleotide)m = (deoxyribonucleotide)n+m + AMP + diphosphate.. Functionally, DNA ligase that seals nicks in double-stranded DNA during DNA replication, DNA recombination and DNA repair. The chain is DNA ligase from Caldivirga maquilingensis (strain ATCC 700844 / DSM 13496 / JCM 10307 / IC-167).